A 134-amino-acid polypeptide reads, in one-letter code: Small ribosomal subunit protein uS11 (134 aa).

Residues Val115–Leu134 form a disordered region. The segment covering Arg125 to Leu134 has biased composition (basic residues).

It belongs to the universal ribosomal protein uS11 family.

This is Small ribosomal subunit protein uS11 (RPS14) from Syntrichia ruralis (Great hairy screw-moss).